A 199-amino-acid chain; its full sequence is 7-methyl-GTP pyrophosphatase (199 aa).

Asp-76 functions as the Proton acceptor in the catalytic mechanism.

This sequence belongs to the Maf family. YceF subfamily. It depends on a divalent metal cation as a cofactor.

The protein resides in the cytoplasm. The catalysed reaction is N(7)-methyl-GTP + H2O = N(7)-methyl-GMP + diphosphate + H(+). In terms of biological role, nucleoside triphosphate pyrophosphatase that hydrolyzes 7-methyl-GTP (m(7)GTP). May have a dual role in cell division arrest and in preventing the incorporation of modified nucleotides into cellular nucleic acids. This Nitrosococcus oceani (strain ATCC 19707 / BCRC 17464 / JCM 30415 / NCIMB 11848 / C-107) protein is 7-methyl-GTP pyrophosphatase.